The following is a 234-amino-acid chain: MKNLLDLEHKLNYYFNDRNLLKNALLHKSLGNERKEYKNQTNERLELLGDAVLDLIVAEYLYKSYKNASEGPIAKLKAMIVSEPILAKISRQIGVGKFLMLSRGEVMSGGRNRESILADSFEAILGAVYIDSNLDEARVFALSHIKQYIDHIEENEDILDFKSILQEYVQKEFKTVPTYELVAERGPDHMKEFEIQVIVGNYKEKAVARNKKKAEQLSAKALCIKLGVKYNEAL.

An RNase III domain is found at 4–133 (LLDLEHKLNY…ILGAVYIDSN (130 aa)). Glu46 contacts Mg(2+). The active site involves Asp50. Mg(2+)-binding residues include Asp119 and Glu122. The active site involves Glu122. Positions 160–228 (DFKSILQEYV…AKALCIKLGV (69 aa)) constitute a DRBM domain.

Belongs to the ribonuclease III family. In terms of assembly, homodimer. Mg(2+) is required as a cofactor.

It is found in the cytoplasm. The catalysed reaction is Endonucleolytic cleavage to 5'-phosphomonoester.. Its function is as follows. Digests double-stranded RNA. Involved in the processing of primary rRNA transcript to yield the immediate precursors to the large and small rRNAs (23S and 16S). Processes some mRNAs, and tRNAs when they are encoded in the rRNA operon. Processes pre-crRNA and tracrRNA of type II CRISPR loci if present in the organism. The polypeptide is Ribonuclease 3 (Fusobacterium nucleatum subsp. nucleatum (strain ATCC 25586 / DSM 15643 / BCRC 10681 / CIP 101130 / JCM 8532 / KCTC 2640 / LMG 13131 / VPI 4355)).